A 305-amino-acid polypeptide reads, in one-letter code: Probable lipid kinase YegS-like (305 aa).

A DAGKc domain is found at 1-129; that stretch reads MTQRRAMLIL…VDLGEVGGKL (129 aa). Residues threonine 39, 65 to 71, and threonine 92 each bind ATP; that span reads GDGTLRD. The Mg(2+) site is built by leucine 210, aspartate 213, and leucine 215. Glutamate 268 (proton acceptor) is an active-site residue.

The protein belongs to the diacylglycerol/lipid kinase family. YegS lipid kinase subfamily. Requires Mg(2+) as cofactor. Ca(2+) is required as a cofactor.

It is found in the cytoplasm. Probably phosphorylates lipids; the in vivo substrate is unknown. This Pseudomonas savastanoi pv. phaseolicola (strain 1448A / Race 6) (Pseudomonas syringae pv. phaseolicola (strain 1448A / Race 6)) protein is Probable lipid kinase YegS-like.